Consider the following 571-residue polypeptide: Proline--tRNA ligase (571 aa).

This sequence belongs to the class-II aminoacyl-tRNA synthetase family. ProS type 1 subfamily. Homodimer.

Its subcellular location is the cytoplasm. It carries out the reaction tRNA(Pro) + L-proline + ATP = L-prolyl-tRNA(Pro) + AMP + diphosphate. Functionally, catalyzes the attachment of proline to tRNA(Pro) in a two-step reaction: proline is first activated by ATP to form Pro-AMP and then transferred to the acceptor end of tRNA(Pro). As ProRS can inadvertently accommodate and process non-cognate amino acids such as alanine and cysteine, to avoid such errors it has two additional distinct editing activities against alanine. One activity is designated as 'pretransfer' editing and involves the tRNA(Pro)-independent hydrolysis of activated Ala-AMP. The other activity is designated 'posttransfer' editing and involves deacylation of mischarged Ala-tRNA(Pro). The misacylated Cys-tRNA(Pro) is not edited by ProRS. This is Proline--tRNA ligase from Shewanella putrefaciens (strain CN-32 / ATCC BAA-453).